Consider the following 191-residue polypeptide: INO80 complex subunit C (191 aa).

The disordered stretch occupies residues 1 to 41; that stretch reads MAAQIPIVAATSTPAVARNSKKRPASPSHNSSGGGYGASKK.

As to quaternary structure, component of the chromatin remodeling INO80 complex; specifically part of a complex module associated with the helicase ATP-binding and the helicase C-terminal domain of INO80. Component of some MLL1/MLL complex, at least composed of the core components KMT2A/MLL1, ASH2L, HCFC1/HCF1, WDR5 and RBBP5, as well as the facultative components BACC1, CHD8, E2F6, HSP70, INO80C, KANSL1, LAS1L, MAX, MCRS1, MGA, MYST1/MOF, PELP1, PHF20, PRP31, RING2, RUVB1/TIP49A, RUVB2/TIP49B, SENP3, TAF1, TAF4, TAF6, TAF7, TAF9 and TEX10.

Its subcellular location is the nucleus. Proposed core component of the chromatin remodeling INO80 complex which is involved in transcriptional regulation, DNA replication and probably DNA repair. This is INO80 complex subunit C (Ino80c) from Mus musculus (Mouse).